Here is a 703-residue protein sequence, read N- to C-terminus: Calpain-8 (703 aa).

The 300-residue stretch at Leu-45–Ser-344 folds into the Calpain catalytic domain. Catalysis depends on residues Cys-105, His-262, and Asn-286. The segment at Lys-355–Leu-512 is domain III. Residues Glu-513–Asp-531 are linker. 4 consecutive EF-hand domains span residues Glu-532–Lys-566, Phe-575–Arg-608, Leu-605–Thr-640, and Ile-670–Val-703. The tract at residues Glu-532–Val-703 is domain IV. Residues Asp-588, Asp-590, Thr-592, Ser-594, Glu-599, Asp-618, Asn-620, Thr-624, and Glu-629 each coordinate Ca(2+).

It belongs to the peptidase C2 family. In terms of assembly, monomer and homooligomer. Interacts with COPS1/GPS1, COPB1, EYA2, NME2, NME4 and TOMM70. Ca(2+) serves as cofactor. Post-translationally, undergoes autolytic cleavage between Ala-5 and Ala-6 which gives rise to fragments extending from Ala-6 to the C-terminus, Ala-6 to the EF-hand 2 domain and from Ala-6 to the beginning of domain III. Predominantly expressed in the stomach. Localizes strictly to the surface mucus cells in the gastric epithelium and the mucus-secreting goblet cells in the duodenum. Detected in the pituitary after estrogen stimulation.

It localises to the cytoplasm. The protein localises to the golgi apparatus. The enzyme catalyses Broad endopeptidase specificity.. Functionally, calcium-regulated non-lysosomal thiol-protease. Involved in membrane trafficking in the gastric surface mucus cells (pit cells) and may involve the membrane trafficking of mucus cells via interactions with coat protein. Proteolytically cleaves the beta-subunit of coatomer complex. This is Calpain-8 (Capn8) from Rattus norvegicus (Rat).